A 155-amino-acid chain; its full sequence is Cyanate hydratase (155 aa).

Active-site residues include Arg95, Glu98, and Ser121.

This sequence belongs to the cyanase family.

The catalysed reaction is cyanate + hydrogencarbonate + 3 H(+) = NH4(+) + 2 CO2. Functionally, catalyzes the reaction of cyanate with bicarbonate to produce ammonia and carbon dioxide. The chain is Cyanate hydratase from Pseudomonas syringae pv. tomato (strain ATCC BAA-871 / DC3000).